The primary structure comprises 82 residues: ATP synthase subunit c, chloroplastic (82 aa).

2 helical membrane-spanning segments follow: residues 3–23 and 57–77; these read PLIC…GAIG and LAFM…LMFA.

It belongs to the ATPase C chain family. F-type ATPases have 2 components, F(1) - the catalytic core - and F(0) - the membrane proton channel. F(1) has five subunits: alpha(3), beta(3), gamma(1), delta(1), epsilon(1). F(0) has four main subunits: a(1), b(1), b'(1) and c(10-14). The alpha and beta chains form an alternating ring which encloses part of the gamma chain. F(1) is attached to F(0) by a central stalk formed by the gamma and epsilon chains, while a peripheral stalk is formed by the delta, b and b' chains.

The protein localises to the plastid. The protein resides in the chloroplast thylakoid membrane. In terms of biological role, f(1)F(0) ATP synthase produces ATP from ADP in the presence of a proton or sodium gradient. F-type ATPases consist of two structural domains, F(1) containing the extramembraneous catalytic core and F(0) containing the membrane proton channel, linked together by a central stalk and a peripheral stalk. During catalysis, ATP synthesis in the catalytic domain of F(1) is coupled via a rotary mechanism of the central stalk subunits to proton translocation. Its function is as follows. Key component of the F(0) channel; it plays a direct role in translocation across the membrane. A homomeric c-ring of between 10-14 subunits forms the central stalk rotor element with the F(1) delta and epsilon subunits. This is ATP synthase subunit c, chloroplastic from Ostreococcus tauri.